Reading from the N-terminus, the 499-residue chain is ATP synthase subunit alpha, chloroplastic (499 aa).

Position 170 to 177 (170 to 177 (GDRQTGKT)) interacts with ATP.

Belongs to the ATPase alpha/beta chains family. As to quaternary structure, F-type ATPases have 2 components, CF(1) - the catalytic core - and CF(0) - the membrane proton channel. CF(1) has five subunits: alpha(3), beta(3), gamma(1), delta(1), epsilon(1). CF(0) has four main subunits: a, b, b' and c.

Its subcellular location is the plastid. It is found in the chloroplast thylakoid membrane. The catalysed reaction is ATP + H2O + 4 H(+)(in) = ADP + phosphate + 5 H(+)(out). Produces ATP from ADP in the presence of a proton gradient across the membrane. The alpha chain is a regulatory subunit. The polypeptide is ATP synthase subunit alpha, chloroplastic (Emiliania huxleyi (Coccolithophore)).